Reading from the N-terminus, the 507-residue chain is Desmethyl-deoxy-podophyllotoxin synthase (507 aa).

The chain crosses the membrane as a helical span at residues 1–21; it reads MEFLSFPLSSALLIILLFMLV. Cys440 contacts heme.

This sequence belongs to the cytochrome P450 family. Requires heme as cofactor. As to expression, rhizome-specific expression.

It localises to the membrane. It carries out the reaction (-)-deoxypodophyllotoxin + reduced [NADPH--hemoprotein reductase] + O2 = (-)-4'-desmethyl-deoxypodophyllotoxin + formaldehyde + oxidized [NADPH--hemoprotein reductase] + H2O + H(+). It participates in aromatic compound metabolism; phenylpropanoid biosynthesis. Cytochrome P450 involved in the biosynthesis of etoposide, a chemotherapeutic compound of the topoisomerase inhibitor family. Catalyzes the conversion of deoxypodophyllotoxin to desmethyl-deoxypodophyllotoxin. This is Desmethyl-deoxy-podophyllotoxin synthase from Sinopodophyllum hexandrum (Himalayan may apple).